Reading from the N-terminus, the 29-residue chain is Kappa-theraphotoxin-Ps1a (29 aa).

Cystine bridges form between C2-C16, C9-C21, and C15-C25. I29 is subject to Isoleucine amide.

The protein belongs to the neurotoxin 30 (phrixotoxin) family. Expressed by the venom gland.

It localises to the secreted. In terms of biological role, potent and specific blocker of Kv4.2/KCND2 (IC(50)=5 nM) and Kv4.3/KCND3 (IC(50)=28 nM) potassium channels. Acts by altering the gating properties of these channels. Also shows moderate inhibition on human voltage-gated sodium channel Nav1.7/SCN9A activation (IC(50)=423 nM). This is Kappa-theraphotoxin-Ps1a from Paraphysa scrofa (Chilean copper tarantula).